Here is an 805-residue protein sequence, read N- to C-terminus: Acetyl-CoA decarbonylase/synthase complex subunit alpha 2 (805 aa).

The [4Fe-4S] cluster site is built by Cys72, Cys75, Cys76, Cys78, Cys83, and Cys93. Residue His116 participates in CO binding. [Ni-4Fe-4S] cluster contacts are provided by His249, Cys277, and Cys322. 2 4Fe-4S ferredoxin-type domains span residues 407–435 (EEFKVYIDKCVKCGECMLACPEELDIPEA) and 445–474 (EYLEALHDVCIGCRRCEQVCKKEIPILNVL). [4Fe-4S] cluster-binding residues include Cys416, Cys419, Cys422, Cys426, Cys454, Cys457, Cys460, and Cys464. [Ni-4Fe-4S] cluster-binding residues include Cys522, Cys551, and Cys586.

This sequence belongs to the Ni-containing carbon monoxide dehydrogenase family. As to quaternary structure, heterotetramer of two alpha and two epsilon subunits. The ACDS complex is made up of alpha, epsilon, beta, gamma and delta subunits with a probable stoichiometry of (alpha(2)epsilon(2))(4)-beta(8)-(gamma(1)delta(1))(8). It depends on [4Fe-4S] cluster as a cofactor. Requires [Ni-4Fe-4S] cluster as cofactor.

It carries out the reaction CO + 2 oxidized [2Fe-2S]-[ferredoxin] + H2O = 2 reduced [2Fe-2S]-[ferredoxin] + CO2 + 2 H(+). It functions in the pathway one-carbon metabolism; methanogenesis from acetate. Functionally, part of the ACDS complex that catalyzes the reversible cleavage of acetyl-CoA, allowing growth on acetate as sole source of carbon and energy. The alpha-epsilon subcomponent functions as a carbon monoxide dehydrogenase. This chain is Acetyl-CoA decarbonylase/synthase complex subunit alpha 2, found in Methanosarcina acetivorans (strain ATCC 35395 / DSM 2834 / JCM 12185 / C2A).